Consider the following 447-residue polypeptide: Probable 7-dehydrocholesterol reductase (447 aa).

8 helical membrane-spanning segments follow: residues 24–44 (LTTA…YLIT), 71–91 (IPSF…FQLI), 102–124 (FVPH…LVYY), 133–153 (IITH…PTII), 157–177 (WGSI…LAYF), 244–264 (YVSN…VDFF), 281–301 (FGWM…TLQA), and 309–329 (IDLS…GYII). Residues Lys-337, Arg-341, Ile-367, Trp-372, and 379–380 (NY) contribute to the NADP(+) site. A helical transmembrane segment spans residues 393–413 (ACGFSHFIPYFYCVYMTILLV). Residues Asp-419, 423–427 (CSRKY), and Tyr-434 contribute to the NADP(+) site.

It belongs to the ERG4/ERG24 family.

The protein resides in the membrane. The catalysed reaction is cholesterol + NADP(+) = 7-dehydrocholesterol + NADPH + H(+). It functions in the pathway steroid biosynthesis; cholesterol biosynthesis. In terms of biological role, catalyzes the last step of the cholesterol synthesis pathway, which transforms cholesta-5,7-dien-3beta-ol (7-dehydrocholesterol,7-DHC) into cholesterol by reducing the C7-C8 double bond of its sterol core. The protein is Probable 7-dehydrocholesterol reductase (DHCR7) of Acanthamoeba polyphaga (Amoeba).